The following is a 1038-amino-acid chain: Bone morphogenetic protein receptor type-2 (1038 aa).

Positions 1-26 (MTSSLHRPFRVPWLLWAVLLVSTTAA) are cleaved as a signal peptide. The Extracellular segment spans residues 27-150 (SQNQERLCAF…PPHSFNRDET (124 aa)). Disulfide bonds link C34–C66, C60–C84, C94–C117, C99–C116, and C118–C123. An N-linked (GlcNAc...) asparagine glycan is attached at N55. N110 carries an N-linked (GlcNAc...) asparagine glycan. A glycan (N-linked (GlcNAc...) asparagine) is linked at N126. A helical membrane pass occupies residues 151–171 (IIIALASVSVLAVLIVALCFG). Residues 172–1038 (YRMLTGDRKQ…VSKDIGMNCL (867 aa)) lie on the Cytoplasmic side of the membrane. Positions 203–504 (LKLLELIGRG…QCAEERMAEL (302 aa)) constitute a Protein kinase domain. ATP contacts are provided by residues 209–217 (IGRGRYGAV), K230, and 280–282 (EYY). The Proton acceptor role is filled by D333. ATP-binding positions include 337–338 (RN) and D351. Phosphothreonine is present on T379. Residue S586 is modified to Phosphoserine. The segment at 593–626 (QAQARIPSPETSVTSLSTNTTTTNTTGLTPSTGM) is disordered. The span at 603–626 (TSVTSLSTNTTTTNTTGLTPSTGM) shows a compositional bias: low complexity. S680 and S681 each carry phosphoserine. A disordered region spans residues 746-769 (PKQQNLPKRPTSLPLNTKNSTKEP). The residue at position 843 (S843) is a Phosphoserine. Over residues 872–896 (RREQQAGHDEGVLDRLVDRRERPLE) the composition is skewed to basic and acidic residues. The segment at 872–974 (RREQQAGHDE…SGSGEKIKRR (103 aa)) is disordered. 2 stretches are compositionally biased toward polar residues: residues 909 to 924 (PCSEQDILTQGVTSTA) and 937 to 964 (RPNSLDLSATNILDGSSIQIGESTQDGK).

It belongs to the protein kinase superfamily. TKL Ser/Thr protein kinase family. TGFB receptor subfamily. As to quaternary structure, interacts with GDF5. Interacts with BMP4. Interacts with SCUBE3. Interacts with TSC22D1/TSC-22. Interacts with activin A/INHBA. Mg(2+) is required as a cofactor. Requires Mn(2+) as cofactor.

The protein localises to the cell membrane. It carries out the reaction L-threonyl-[receptor-protein] + ATP = O-phospho-L-threonyl-[receptor-protein] + ADP + H(+). It catalyses the reaction L-seryl-[receptor-protein] + ATP = O-phospho-L-seryl-[receptor-protein] + ADP + H(+). Functionally, on ligand binding, forms a receptor complex consisting of two type II and two type I transmembrane serine/threonine kinases. Type II receptors phosphorylate and activate type I receptors which autophosphorylate, then bind and activate SMAD transcriptional regulators. Can also mediate signaling through the activation of the p38MAPK cascade. Binds to BMP7, BMP2 and, less efficiently, BMP4. Binding is weak but enhanced by the presence of type I receptors for BMPs. Mediates induction of adipogenesis by GDF6. Promotes signaling also by binding to activin A/INHBA. This is Bone morphogenetic protein receptor type-2 (Bmpr2) from Mus musculus (Mouse).